The primary structure comprises 296 residues: Formamidopyrimidine-DNA glycosylase (296 aa).

Catalysis depends on Pro2, which acts as the Schiff-base intermediate with DNA. Glu3 functions as the Proton donor in the catalytic mechanism. Lys61 (proton donor; for beta-elimination activity) is an active-site residue. DNA contacts are provided by His104, Arg123, and Lys169. The segment at 255–289 adopts an FPG-type zinc-finger fold; that stretch reads DAYGREGEPCRRCGAIMRRDKFMNRSSFYCPRCQP. Residue Arg279 is the Proton donor; for delta-elimination activity of the active site.

Belongs to the FPG family. Monomer. Zn(2+) is required as a cofactor.

It catalyses the reaction Hydrolysis of DNA containing ring-opened 7-methylguanine residues, releasing 2,6-diamino-4-hydroxy-5-(N-methyl)formamidopyrimidine.. The enzyme catalyses 2'-deoxyribonucleotide-(2'-deoxyribose 5'-phosphate)-2'-deoxyribonucleotide-DNA = a 3'-end 2'-deoxyribonucleotide-(2,3-dehydro-2,3-deoxyribose 5'-phosphate)-DNA + a 5'-end 5'-phospho-2'-deoxyribonucleoside-DNA + H(+). Functionally, involved in base excision repair of DNA damaged by oxidation or by mutagenic agents. Acts as a DNA glycosylase that recognizes and removes damaged bases. Has a preference for oxidized purines, such as 7,8-dihydro-8-oxoguanine (8-oxoG). Has AP (apurinic/apyrimidinic) lyase activity and introduces nicks in the DNA strand. Cleaves the DNA backbone by beta-delta elimination to generate a single-strand break at the site of the removed base with both 3'- and 5'-phosphates. The polypeptide is Formamidopyrimidine-DNA glycosylase (Mycobacterium sp. (strain KMS)).